Here is a 195-residue protein sequence, read N- to C-terminus: Glycerol-3-phosphate acyltransferase (195 aa).

5 consecutive transmembrane segments (helical) span residues I3 to L23, A53 to I73, F80 to F100, L115 to F135, and I147 to A167.

The protein belongs to the PlsY family. As to quaternary structure, probably interacts with PlsX.

It is found in the cell inner membrane. It catalyses the reaction an acyl phosphate + sn-glycerol 3-phosphate = a 1-acyl-sn-glycero-3-phosphate + phosphate. The protein operates within lipid metabolism; phospholipid metabolism. Its function is as follows. Catalyzes the transfer of an acyl group from acyl-phosphate (acyl-PO(4)) to glycerol-3-phosphate (G3P) to form lysophosphatidic acid (LPA). This enzyme utilizes acyl-phosphate as fatty acyl donor, but not acyl-CoA or acyl-ACP. The polypeptide is Glycerol-3-phosphate acyltransferase (Ehrlichia chaffeensis (strain ATCC CRL-10679 / Arkansas)).